A 141-amino-acid polypeptide reads, in one-letter code: Large ribosomal subunit protein uL11 (141 aa).

Belongs to the universal ribosomal protein uL11 family. In terms of assembly, part of the ribosomal stalk of the 50S ribosomal subunit. Interacts with L10 and the large rRNA to form the base of the stalk. L10 forms an elongated spine to which L12 dimers bind in a sequential fashion forming a multimeric L10(L12)X complex. One or more lysine residues are methylated.

Functionally, forms part of the ribosomal stalk which helps the ribosome interact with GTP-bound translation factors. This is Large ribosomal subunit protein uL11 from Synechococcus sp. (strain RCC307).